The chain runs to 352 residues: uncharacterized protein (352 aa).

8 helical membrane passes run 6-26 (FIFL…IINP), 30-50 (FHIV…IINI), 76-96 (IFLT…FVII), 151-171 (EFII…LPFL), 197-217 (FILV…LPLI), 226-246 (VKVD…IEGL), 291-311 (WLPI…ASFA), and 330-350 (LIGG…AKIF).

It belongs to the CitM (TC 2.A.11) transporter family.

The protein resides in the cell membrane. This is an uncharacterized protein from Methanocaldococcus jannaschii (strain ATCC 43067 / DSM 2661 / JAL-1 / JCM 10045 / NBRC 100440) (Methanococcus jannaschii).